We begin with the raw amino-acid sequence, 342 residues long: Ribosomal RNA small subunit methyltransferase C (342 aa).

The protein belongs to the methyltransferase superfamily. RsmC family. Monomer.

It localises to the cytoplasm. It catalyses the reaction guanosine(1207) in 16S rRNA + S-adenosyl-L-methionine = N(2)-methylguanosine(1207) in 16S rRNA + S-adenosyl-L-homocysteine + H(+). Its function is as follows. Specifically methylates the guanine in position 1207 of 16S rRNA in the 30S particle. This chain is Ribosomal RNA small subunit methyltransferase C, found in Shewanella sp. (strain MR-4).